The following is a 238-amino-acid chain: Formate dehydrogenase, cytochrome b556 subunit (238 aa).

Residues H23 and H62 each contribute to the heme b site. Transmembrane regions (helical) follow at residues 23–43, 60–80, 120–140, and 155–175; these read HWMLVICFFMTMFTGVAFFFP, AIHPFTGILMFFAFIYLALLY, MLFWTLNLAMVTLLVTGIIMW, and IAILLHSASAFMLFTGILVHI. Residues H160 and H174 each coordinate heme b.

The protein belongs to the formate dehydrogenase gamma subunit family. In terms of assembly, formate dehydrogenase is a membrane-bound complex, formed by subunits alpha, beta and gamma. It depends on heme as a cofactor.

The protein resides in the cell membrane. Its function is as follows. Allows to use formate as major electron donor during anaerobic respiration. Subunit gamma is probably the cytochrome b556(FDO) component of the formate dehydrogenase. This chain is Formate dehydrogenase, cytochrome b556 subunit (fdxI), found in Haemophilus influenzae (strain ATCC 51907 / DSM 11121 / KW20 / Rd).